The primary structure comprises 223 residues: Large ribosomal subunit protein uL3 (223 aa).

The protein belongs to the universal ribosomal protein uL3 family. In terms of assembly, part of the 50S ribosomal subunit. Forms a cluster with proteins L14 and L19.

Functionally, one of the primary rRNA binding proteins, it binds directly near the 3'-end of the 23S rRNA, where it nucleates assembly of the 50S subunit. This Cutibacterium acnes (strain DSM 16379 / KPA171202) (Propionibacterium acnes) protein is Large ribosomal subunit protein uL3.